An 884-amino-acid chain; its full sequence is Translation initiation factor IF-2 (884 aa).

The disordered stretch occupies residues 93–288; the sequence is VNTPEAEQAK…KGKRKPSTLQ (196 aa). Positions 99 to 209 are enriched in basic and acidic residues; it reads EQAKAEEQAQ…KMAAENEGKW (111 aa). Over residues 216-229 the composition is skewed to polar residues; it reads QTESADYHVTTSQH. Over residues 231-246 the composition is skewed to basic and acidic residues; sequence RAAEDENDAKVEGDRR. Residues 247-261 are compositionally biased toward basic residues; the sequence is SRTRGGKATKQKKGN. Residues 262-275 are compositionally biased toward basic and acidic residues; that stretch reads KLSESKADREEARA. Positions 383 to 552 constitute a tr-type G domain; it reads HRAPVVTIMG…LLQAEVLELK (170 aa). The segment at 392–399 is G1; sequence GHVDHGKT. 392–399 lines the GTP pocket; it reads GHVDHGKT. A G2 region spans residues 417–421; it reads GITQH. The G3 stretch occupies residues 438–441; the sequence is DTPG. GTP contacts are provided by residues 438–442 and 492–495; these read DTPGH and NKID. Positions 492 to 495 are G4; that stretch reads NKID. Residues 528–530 are G5; the sequence is SAK.

It belongs to the TRAFAC class translation factor GTPase superfamily. Classic translation factor GTPase family. IF-2 subfamily.

It is found in the cytoplasm. In terms of biological role, one of the essential components for the initiation of protein synthesis. Protects formylmethionyl-tRNA from spontaneous hydrolysis and promotes its binding to the 30S ribosomal subunits. Also involved in the hydrolysis of GTP during the formation of the 70S ribosomal complex. This chain is Translation initiation factor IF-2, found in Yersinia pestis bv. Antiqua (strain Angola).